The following is a 436-amino-acid chain: GTPase Der (436 aa).

EngA-type G domains are found at residues 4–167 and 176–351; these read PVVA…PKRG and IKFC…ENHA. GTP contacts are provided by residues 10–17, 57–61, 119–122, 182–189, 229–233, and 294–297; these read GRPNVGKS, DTGGI, NKID, DTAGM, and NKWD. Residues 352 to 436 enclose the KH-like domain; sequence MRVQTNVLNE…PIKIIARPRK (85 aa).

Belongs to the TRAFAC class TrmE-Era-EngA-EngB-Septin-like GTPase superfamily. EngA (Der) GTPase family. In terms of assembly, associates with the 50S ribosomal subunit.

GTPase that plays an essential role in the late steps of ribosome biogenesis. This chain is GTPase Der, found in Geobacillus sp. (strain WCH70).